The chain runs to 102 residues: Large ribosomal subunit protein bL21 (102 aa).

This sequence belongs to the bacterial ribosomal protein bL21 family. Part of the 50S ribosomal subunit. Contacts protein L20.

Functionally, this protein binds to 23S rRNA in the presence of protein L20. The chain is Large ribosomal subunit protein bL21 from Nitratidesulfovibrio vulgaris (strain DSM 19637 / Miyazaki F) (Desulfovibrio vulgaris).